The following is a 130-amino-acid chain: S-protein homolog 22 (130 aa).

The first 21 residues, 1 to 21 (MKYFTIFFIFFSLCMFGHVSG), serve as a signal peptide directing secretion.

Belongs to the plant self-incompatibility (S1) protein family.

The protein resides in the secreted. In Arabidopsis thaliana (Mouse-ear cress), this protein is S-protein homolog 22.